Consider the following 111-residue polypeptide: COX assembly mitochondrial protein (111 aa).

The CHCH domain occupies 39-82 (YKKCANFVQAMADCAKANGMKVFPTCDKQRDEMKSCLLFYQTDE). 2 consecutive short sequence motifs (cx9C motif) follow at residues 42–52 (CANFVQAMADC) and 64–74 (CDKQRDEMKSC). Cystine bridges form between C42–C74 and C52–C64.

The protein belongs to the CMC family.

It is found in the mitochondrion inner membrane. Its function is as follows. Required for mitochondrial cytochrome c oxidase (COX) assembly and respiration. Binds copper. May be involved in copper trafficking and distribution to mitochondrial COX and SOD1. The chain is COX assembly mitochondrial protein (CMC1) from Saccharomyces cerevisiae (strain RM11-1a) (Baker's yeast).